We begin with the raw amino-acid sequence, 631 residues long: DNA ligase (631 aa).

Residues 37–41 and 79–80 each bind NAD(+); these read DAHYD and ST. The active-site N6-AMP-lysine intermediate is Lys115. NAD(+)-binding residues include Arg131, Glu160, and Lys272. Cys361, Cys364, Cys377, and Cys382 together coordinate Zn(2+). The BRCT domain occupies 539-630; it reads DVSSPISGKG…SQSSPEQMSL (92 aa).

This sequence belongs to the NAD-dependent DNA ligase family. LigA subfamily. Mg(2+) serves as cofactor. Mn(2+) is required as a cofactor.

It carries out the reaction NAD(+) + (deoxyribonucleotide)n-3'-hydroxyl + 5'-phospho-(deoxyribonucleotide)m = (deoxyribonucleotide)n+m + AMP + beta-nicotinamide D-nucleotide.. Its function is as follows. DNA ligase that catalyzes the formation of phosphodiester linkages between 5'-phosphoryl and 3'-hydroxyl groups in double-stranded DNA using NAD as a coenzyme and as the energy source for the reaction. It is essential for DNA replication and repair of damaged DNA. The polypeptide is DNA ligase (Desulfatibacillum aliphaticivorans).